Here is a 542-residue protein sequence, read N- to C-terminus: Global nitrogen regulator NrpR (542 aa).

Positions I12–L77 are winged helix-turn-helix. NRD stretches follow at residues R85–I320 and R321–I542.

It belongs to the NrpR family. As to quaternary structure, homodimer.

With respect to regulation, under nitrogen limitation, binding of the intracellular nitrogen metabolite 2-oxoglutarate to NrpR decreases the binding affinity of NrpR to DNA, leading to initiation of transcription. Transcriptional repressor of nitrogen fixation and assimilation genes. Binds to two tandem operators in the glnA and nif promoters, thereby blocking transcription of the genes. The chain is Global nitrogen regulator NrpR from Methanocaldococcus jannaschii (strain ATCC 43067 / DSM 2661 / JAL-1 / JCM 10045 / NBRC 100440) (Methanococcus jannaschii).